The sequence spans 225 residues: KDP operon transcriptional regulatory protein KdpE (225 aa).

The 114-residue stretch at 3-116 folds into the Response regulatory domain; that stretch reads NVLIVEDEQA…ELQARLRVAL (114 aa). Aspartate 52 is modified (4-aspartylphosphate). The segment at residues 126–225 is a DNA-binding region (ompR/PhoB-type); that stretch reads DPLVKFSDVT…ETGIGYRFML (100 aa).

Phosphorylated by KdpD.

It is found in the cytoplasm. Member of the two-component regulatory system KdpD/KdpE involved in the regulation of the kdp operon. The chain is KDP operon transcriptional regulatory protein KdpE (kdpE) from Escherichia coli (strain K12).